The primary structure comprises 389 residues: Probable peptide chain release factor 1, mitochondrial (389 aa).

At Gln-259 the chain carries N5-methylglutamine.

The protein belongs to the prokaryotic/mitochondrial release factor family. In terms of processing, methylation of glutamine in the GGQ triplet is conserved from bacteria to mammals.

It is found in the mitochondrion. Its function is as follows. Mitochondrial peptide chain release factor that directs the termination of translation in response to the peptide chain termination codons UAA and UAG. The protein is Probable peptide chain release factor 1, mitochondrial of Caenorhabditis elegans.